Here is a 276-residue protein sequence, read N- to C-terminus: Undecaprenyl-diphosphatase (276 aa).

The next 6 membrane-spanning stretches (helical) occupy residues 43–63 (RAMA…VWEF), 85–105 (LNLL…ADTI), 109–129 (LFNA…MLWA), 183–203 (AATE…AVYS), 218–238 (VFAI…RGLL), and 254–274 (IAFG…WASA).

The protein belongs to the UppP family.

The protein resides in the cell inner membrane. The enzyme catalyses di-trans,octa-cis-undecaprenyl diphosphate + H2O = di-trans,octa-cis-undecaprenyl phosphate + phosphate + H(+). Catalyzes the dephosphorylation of undecaprenyl diphosphate (UPP). Confers resistance to bacitracin. This is Undecaprenyl-diphosphatase from Pseudomonas syringae pv. syringae (strain B728a).